Consider the following 488-residue polypeptide: Elongation factor Tu, chloroplastic (488 aa).

The interval 1-20 is disordered; that stretch reads MALSSTAATTSSKLKLSNPP. The transit peptide at 1–79 directs the protein to the chloroplast; that stretch reads MALSSTAATT…RPSSSPFTVR (79 aa). The 205-residue stretch at 89 to 293 folds into the tr-type G domain; it reads KPHLNIGTIG…EVDKYIPIPQ (205 aa). Residues 98–105 form a G1 region; it reads GHVDHGKT. A GTP-binding site is contributed by 98-105; that stretch reads GHVDHGKT. The G2 stretch occupies residues 139 to 143; the sequence is GITIN. The interval 160–163 is G3; the sequence is DCPG. Residues 160-164 and 215-218 each bind GTP; these read DCPGH and NKQD. Residues 215–218 are G4; the sequence is NKQD. The segment at 253-255 is G5; it reads SAL.

The protein belongs to the TRAFAC class translation factor GTPase superfamily. Classic translation factor GTPase family. EF-Tu/EF-1A subfamily. As to expression, higher expression in leaves than in roots.

The protein localises to the plastid. It is found in the chloroplast. This protein promotes the GTP-dependent binding of aminoacyl-tRNA to the A-site of ribosomes during protein biosynthesis. The protein is Elongation factor Tu, chloroplastic (tufA) of Pisum sativum (Garden pea).